Here is a 145-residue protein sequence, read N- to C-terminus: RING-H2 finger protein ATL18 (145 aa).

The N-terminal stretch at 1 to 29 (MISMLFPRSPLCTAAIVFYTCVCIPLGRL) is a signal peptide. The segment at 62 to 105 (CPICLVEFEAEDAVTHLPRCAHLFHINCIEPWLLRGHLTCPLCR) adopts an RING-type; atypical zinc-finger fold. A helical transmembrane segment spans residues 125-145 (STLYLSIFFFFCIFLHLLGYL).

It belongs to the RING-type zinc finger family. ATL subfamily.

It is found in the membrane. It catalyses the reaction S-ubiquitinyl-[E2 ubiquitin-conjugating enzyme]-L-cysteine + [acceptor protein]-L-lysine = [E2 ubiquitin-conjugating enzyme]-L-cysteine + N(6)-ubiquitinyl-[acceptor protein]-L-lysine.. It functions in the pathway protein modification; protein ubiquitination. This Arabidopsis thaliana (Mouse-ear cress) protein is RING-H2 finger protein ATL18 (ATL18).